The sequence spans 268 residues: Undecaprenyl-diphosphatase (268 aa).

7 helical membrane-spanning segments follow: residues 43–63, 83–103, 109–129, 144–164, 184–204, 218–238, and 246–266; these read FWNT…VVIY, FVIG…IAGK, LFNP…LMWV, FPLP…IPGV, AAEF…AYDF, IVAI…KAFL, and FTFF…ALAL.

Belongs to the UppP family.

The protein resides in the cell inner membrane. The enzyme catalyses di-trans,octa-cis-undecaprenyl diphosphate + H2O = di-trans,octa-cis-undecaprenyl phosphate + phosphate + H(+). Catalyzes the dephosphorylation of undecaprenyl diphosphate (UPP). Confers resistance to bacitracin. This is Undecaprenyl-diphosphatase from Nitrobacter hamburgensis (strain DSM 10229 / NCIMB 13809 / X14).